The primary structure comprises 460 residues: Diguanylate cyclase DosC (460 aa).

Heme is bound at residue histidine 98. The GGDEF domain occupies 325–458 (TPLSVLIIDV…GRNRVELWKA (134 aa)). Aspartate 333 is a binding site for Mg(2+). Substrate is bound by residues asparagine 341 and aspartate 350. Mg(2+) is bound at residue aspartate 376. Catalysis depends on aspartate 376, which acts as the Proton acceptor.

The cofactor is heme. Mg(2+) is required as a cofactor.

It carries out the reaction 2 GTP = 3',3'-c-di-GMP + 2 diphosphate. It functions in the pathway purine metabolism; 3',5'-cyclic di-GMP biosynthesis. Globin-coupled heme-based oxygen sensor protein displaying diguanylate cyclase (DGC) activity in response to oxygen availability. Thus, catalyzes the synthesis of cyclic diguanylate (c-di-GMP) via the condensation of 2 GTP molecules. Cyclic-di-GMP is a second messenger which controls cell surface-associated traits in bacteria. In Shigella sonnei (strain Ss046), this protein is Diguanylate cyclase DosC (dosC).